A 418-amino-acid chain; its full sequence is Serine hydroxymethyltransferase (418 aa).

(6S)-5,6,7,8-tetrahydrofolate is bound by residues Leu121 and Gly125–Leu127. N6-(pyridoxal phosphate)lysine is present on Lys230. Ser355–Phe357 provides a ligand contact to (6S)-5,6,7,8-tetrahydrofolate.

It belongs to the SHMT family. Homodimer. It depends on pyridoxal 5'-phosphate as a cofactor.

The protein resides in the cytoplasm. It carries out the reaction (6R)-5,10-methylene-5,6,7,8-tetrahydrofolate + glycine + H2O = (6S)-5,6,7,8-tetrahydrofolate + L-serine. It participates in one-carbon metabolism; tetrahydrofolate interconversion. It functions in the pathway amino-acid biosynthesis; glycine biosynthesis; glycine from L-serine: step 1/1. In terms of biological role, catalyzes the reversible interconversion of serine and glycine with tetrahydrofolate (THF) serving as the one-carbon carrier. This reaction serves as the major source of one-carbon groups required for the biosynthesis of purines, thymidylate, methionine, and other important biomolecules. Also exhibits THF-independent aldolase activity toward beta-hydroxyamino acids, producing glycine and aldehydes, via a retro-aldol mechanism. The protein is Serine hydroxymethyltransferase of Streptococcus pyogenes serotype M5 (strain Manfredo).